The chain runs to 364 residues: DNA replication and repair protein RecF (364 aa).

ATP is bound at residue 30 to 37; the sequence is GDNGAGKT.

The protein belongs to the RecF family.

The protein resides in the cytoplasm. The RecF protein is involved in DNA metabolism; it is required for DNA replication and normal SOS inducibility. RecF binds preferentially to single-stranded, linear DNA. It also seems to bind ATP. This Stenotrophomonas maltophilia (strain K279a) protein is DNA replication and repair protein RecF.